Reading from the N-terminus, the 507-residue chain is MGVFRFISISLAAVSAANAAQILSMPHAQTVPHSYIVMMKDDTSDDDFNHHQSWLQSTHTHNITRRATIQNAGMRHKYNFRKMKGYSGIFDEETIKDIAKDPKVMFVEPDTIISVNGKVEQSNVPSWGLARISNSQPGANSYVYDSSAGEGITVYSVDTGVDINHEDFEGRAIWGSNQVNDGDDRDGSGHGTHTSGTMVGKEFGIAKKAKLVAVKVLGNDGSGPTSGIVAGINWCVEHARQNGGNDKAVMNMSLGGSSSSALNRAAAQAVEQGMFLSVAAGNENQDARSSSPASEPSVCTVGSSAEDDSRSSFSNWGPALDLFAPGSNIISARPGGGSQSMSGTSMAAPHVAGLAAYLMALEGISGGAVCDRLKELGSSSITDVGPGTPTNVLISNGGAKGGNPKPAPGPSPNPSQPSEPQQPAPSQPGEPGESFPGEPFPGEPFPGEPFPGESSPGESAPAPAPMPPSPQHPHTPYPGGDNFDFDGYWKKYFGGEHWRKMFGSFWN.

An N-terminal signal peptide occupies residues 1 to 19; sequence MGVFRFISISLAAVSAANA. The propeptide occupies 20–116; that stretch reads AQILSMPHAQ…VEPDTIISVN (97 aa). Residues 34–113 enclose the Inhibitor I9 domain; sequence SYIVMMKDDT…VMFVEPDTII (80 aa). One can recognise a Peptidase S8 domain in the interval 126 to 400; the sequence is SWGLARISNS…NVLISNGGAK (275 aa). Catalysis depends on charge relay system residues aspartate 158 and histidine 190. The segment at 175-198 is disordered; sequence GSNQVNDGDDRDGSGHGTHTSGTM. A glycan (N-linked (GlcNAc...) asparagine) is linked at asparagine 251. Polar residues predominate over residues 282-294; it reads NENQDARSSSPAS. The segment at 282 to 312 is disordered; sequence NENQDARSSSPASEPSVCTVGSSAEDDSRSS. Serine 345 (charge relay system) is an active-site residue. A compositionally biased stretch (polar residues) spans 378 to 394; that stretch reads SSSITDVGPGTPTNVLI. Positions 378 to 486 are disordered; the sequence is SSSITDVGPG…YPGGDNFDFD (109 aa). Pro residues-rich tracts occupy residues 405–428 and 438–449; these read KPAP…PSQP and EPFPGEPFPGEP. Residues 450-461 are compositionally biased toward low complexity; that stretch reads FPGESSPGESAP. Residues 462–476 show a composition bias toward pro residues; sequence APAPMPPSPQHPHTP.

This sequence belongs to the peptidase S8 family.

The protein localises to the secreted. Secreted subtilisin-like serine protease with keratinolytic activity that contributes to pathogenicity. The sequence is that of Subtilisin-like protease 1 (SUB1) from Trichophyton equinum (Horse ringworm fungus).